Reading from the N-terminus, the 271-residue chain is 4-diphosphocytidyl-2-C-methyl-D-erythritol kinase (271 aa).

The active site involves Lys-17. 97-107 (PVGSGLGGGSS) is a binding site for ATP. Residue Asp-137 is part of the active site.

It belongs to the GHMP kinase family. IspE subfamily.

The catalysed reaction is 4-CDP-2-C-methyl-D-erythritol + ATP = 4-CDP-2-C-methyl-D-erythritol 2-phosphate + ADP + H(+). The protein operates within isoprenoid biosynthesis; isopentenyl diphosphate biosynthesis via DXP pathway; isopentenyl diphosphate from 1-deoxy-D-xylulose 5-phosphate: step 3/6. In terms of biological role, catalyzes the phosphorylation of the position 2 hydroxy group of 4-diphosphocytidyl-2C-methyl-D-erythritol. In Thermotoga maritima (strain ATCC 43589 / DSM 3109 / JCM 10099 / NBRC 100826 / MSB8), this protein is 4-diphosphocytidyl-2-C-methyl-D-erythritol kinase.